Reading from the N-terminus, the 540-residue chain is Chaperonin GroEL (540 aa).

ATP contacts are provided by residues Thr-29–Pro-32, Asp-86–Thr-90, Gly-413, Asn-476–Ala-478, and Asp-492.

Belongs to the chaperonin (HSP60) family. As to quaternary structure, forms a cylinder of 14 subunits composed of two heptameric rings stacked back-to-back. Interacts with the co-chaperonin GroES.

It localises to the cytoplasm. It carries out the reaction ATP + H2O + a folded polypeptide = ADP + phosphate + an unfolded polypeptide.. Together with its co-chaperonin GroES, plays an essential role in assisting protein folding. The GroEL-GroES system forms a nano-cage that allows encapsulation of the non-native substrate proteins and provides a physical environment optimized to promote and accelerate protein folding. This Tsukamurella paurometabola (Corynebacterium paurometabolum) protein is Chaperonin GroEL.